Consider the following 616-residue polypeptide: Chaperone protein HscA (616 aa).

This sequence belongs to the heat shock protein 70 family.

Chaperone involved in the maturation of iron-sulfur cluster-containing proteins. Has a low intrinsic ATPase activity which is markedly stimulated by HscB. Involved in the maturation of IscU. The sequence is that of Chaperone protein HscA from Photorhabdus laumondii subsp. laumondii (strain DSM 15139 / CIP 105565 / TT01) (Photorhabdus luminescens subsp. laumondii).